An 877-amino-acid polypeptide reads, in one-letter code: Probable alpha/beta-glucosidase agdC (877 aa).

The signal sequence occupies residues 1–14 (MLGSLLLLAPLAGA). Residues Asn-171, Asn-293, and Asn-373 are each glycosylated (N-linked (GlcNAc...) asparagine). Asp-422 functions as the Nucleophile in the catalytic mechanism. Residue Glu-425 is part of the active site. Positions 432 to 476 (DPCTDPERYSSENNLPPAPPPVRSSSPRPLPGFPADFQPSSASRS) are disordered. Over residues 447–463 (PPAPPPVRSSSPRPLPG) the composition is skewed to pro residues. Residue Asn-508 is glycosylated (N-linked (GlcNAc...) asparagine). Asp-573 serves as the catalytic Proton donor. N-linked (GlcNAc...) asparagine glycans are attached at residues Asn-574, Asn-610, and Asn-744.

This sequence belongs to the glycosyl hydrolase 31 family.

It localises to the secreted. It catalyses the reaction Hydrolysis of terminal, non-reducing (1-&gt;4)-linked alpha-D-glucose residues with release of alpha-D-glucose.. The catalysed reaction is Hydrolysis of terminal, non-reducing beta-D-glucosyl residues with release of beta-D-glucose.. Glucosidase involved in the degradation of cellulosic biomass. Has both alpha- and beta-glucosidase activity. The chain is Probable alpha/beta-glucosidase agdC (agdC) from Aspergillus flavus (strain ATCC 200026 / FGSC A1120 / IAM 13836 / NRRL 3357 / JCM 12722 / SRRC 167).